Here is a 483-residue protein sequence, read N- to C-terminus: Cysteine--tRNA ligase (483 aa).

C28 provides a ligand contact to Zn(2+). Residues 30-40 (MTVYDYCHLGH) carry the 'HIGH' region motif. 3 residues coordinate Zn(2+): C212, H237, and E241. Positions 269 to 273 (KMSKS) match the 'KMSKS' region motif. Position 272 (K272) interacts with ATP.

This sequence belongs to the class-I aminoacyl-tRNA synthetase family. Monomer. Zn(2+) is required as a cofactor.

The protein resides in the cytoplasm. It catalyses the reaction tRNA(Cys) + L-cysteine + ATP = L-cysteinyl-tRNA(Cys) + AMP + diphosphate. This is Cysteine--tRNA ligase from Bordetella avium (strain 197N).